We begin with the raw amino-acid sequence, 306 residues long: MIFQRTVQKMVKSTGVGLHSGNKVTLCIMPAPVNTGIVLKRTDLSPAVSIPAKADMVRETTMCTALVNDAGIRISTIEHLFAALAGLGIDNAIIEVDAPEIPIMDGSASPFVFLLQSAGIKEQAAAKKYLKIIKPVRVEDGDKWAELKPFKGFRVDFRIDFDHPEIARSQQHMVMDFSTSAFVKDISRARTFGFMRDIEYLRANNLALGGSMENAVVLDEYRVLNPDGLRYEDEFVKHKILDAFGDLYVAGHAIVGEFSAYKTGHALNNQLVRALLAQQDAWELVSFDKEADVPVSFMVPGALAHV.

3 residues coordinate Zn(2+): histidine 79, histidine 238, and aspartate 242. Histidine 265 serves as the catalytic Proton donor.

Belongs to the LpxC family. Requires Zn(2+) as cofactor.

The catalysed reaction is a UDP-3-O-[(3R)-3-hydroxyacyl]-N-acetyl-alpha-D-glucosamine + H2O = a UDP-3-O-[(3R)-3-hydroxyacyl]-alpha-D-glucosamine + acetate. It functions in the pathway glycolipid biosynthesis; lipid IV(A) biosynthesis; lipid IV(A) from (3R)-3-hydroxytetradecanoyl-[acyl-carrier-protein] and UDP-N-acetyl-alpha-D-glucosamine: step 2/6. In terms of biological role, catalyzes the hydrolysis of UDP-3-O-myristoyl-N-acetylglucosamine to form UDP-3-O-myristoylglucosamine and acetate, the committed step in lipid A biosynthesis. The protein is UDP-3-O-acyl-N-acetylglucosamine deacetylase of Shewanella frigidimarina (strain NCIMB 400).